Reading from the N-terminus, the 513-residue chain is GMP synthase [glutamine-hydrolyzing] (513 aa).

In terms of domain architecture, Glutamine amidotransferase type-1 spans 5–196 (QILILDFGSQ…LYDIAKCNKD (192 aa)). C83 (nucleophile) is an active-site residue. Active-site residues include H170 and E172. In terms of domain architecture, GMPS ATP-PPase spans 197-388 (WNLDDFIDQQ…LGLPEEMINR (192 aa)). 224 to 230 (SGGVDSS) lines the ATP pocket.

As to quaternary structure, homodimer.

It catalyses the reaction XMP + L-glutamine + ATP + H2O = GMP + L-glutamate + AMP + diphosphate + 2 H(+). It functions in the pathway purine metabolism; GMP biosynthesis; GMP from XMP (L-Gln route): step 1/1. Functionally, catalyzes the synthesis of GMP from XMP. This chain is GMP synthase [glutamine-hydrolyzing], found in Mesoplasma florum (strain ATCC 33453 / NBRC 100688 / NCTC 11704 / L1) (Acholeplasma florum).